We begin with the raw amino-acid sequence, 186 residues long: Adenine phosphoribosyltransferase (186 aa).

This sequence belongs to the purine/pyrimidine phosphoribosyltransferase family. In terms of assembly, homodimer.

It is found in the cytoplasm. It catalyses the reaction AMP + diphosphate = 5-phospho-alpha-D-ribose 1-diphosphate + adenine. It functions in the pathway purine metabolism; AMP biosynthesis via salvage pathway; AMP from adenine: step 1/1. Its function is as follows. Catalyzes a salvage reaction resulting in the formation of AMP, that is energically less costly than de novo synthesis. This Xanthomonas oryzae pv. oryzae (strain MAFF 311018) protein is Adenine phosphoribosyltransferase.